Reading from the N-terminus, the 158-residue chain is UPF0262 protein Rsph17029_2283 (158 aa).

The protein belongs to the UPF0262 family.

This chain is UPF0262 protein Rsph17029_2283, found in Cereibacter sphaeroides (strain ATCC 17029 / ATH 2.4.9) (Rhodobacter sphaeroides).